We begin with the raw amino-acid sequence, 245 residues long: Ubiquinone biosynthesis O-methyltransferase (245 aa).

Positions 49, 69, 90, and 134 each coordinate S-adenosyl-L-methionine.

The protein belongs to the methyltransferase superfamily. UbiG/COQ3 family.

It catalyses the reaction a 3-demethylubiquinol + S-adenosyl-L-methionine = a ubiquinol + S-adenosyl-L-homocysteine + H(+). The enzyme catalyses a 3-(all-trans-polyprenyl)benzene-1,2-diol + S-adenosyl-L-methionine = a 2-methoxy-6-(all-trans-polyprenyl)phenol + S-adenosyl-L-homocysteine + H(+). It functions in the pathway cofactor biosynthesis; ubiquinone biosynthesis. Functionally, O-methyltransferase that catalyzes the 2 O-methylation steps in the ubiquinone biosynthetic pathway. This chain is Ubiquinone biosynthesis O-methyltransferase, found in Vibrio cholerae serotype O1 (strain ATCC 39541 / Classical Ogawa 395 / O395).